Here is a 209-residue protein sequence, read N- to C-terminus: ATP-dependent Clp protease proteolytic subunit 2 (209 aa).

Serine 107 functions as the Nucleophile in the catalytic mechanism. The active site involves histidine 132.

Belongs to the peptidase S14 family. As to quaternary structure, fourteen ClpP subunits assemble into 2 heptameric rings which stack back to back to give a disk-like structure with a central cavity, resembling the structure of eukaryotic proteasomes.

Its subcellular location is the cytoplasm. The enzyme catalyses Hydrolysis of proteins to small peptides in the presence of ATP and magnesium. alpha-casein is the usual test substrate. In the absence of ATP, only oligopeptides shorter than five residues are hydrolyzed (such as succinyl-Leu-Tyr-|-NHMec, and Leu-Tyr-Leu-|-Tyr-Trp, in which cleavage of the -Tyr-|-Leu- and -Tyr-|-Trp bonds also occurs).. Cleaves peptides in various proteins in a process that requires ATP hydrolysis. Has a chymotrypsin-like activity. Plays a major role in the degradation of misfolded proteins. The chain is ATP-dependent Clp protease proteolytic subunit 2 from Corynebacterium jeikeium (strain K411).